The chain runs to 151 residues: Protein PLANT CADMIUM RESISTANCE 1 (151 aa).

A run of 2 helical transmembrane segments spans residues 31-47 (ITLC…AEIV) and 54-71 (CCAA…TSCG).

Belongs to the cornifelin family. As to quaternary structure, homopentamer. As to expression, expressed in aerial part, but not in roots. Detected in the guard and mesophyll cells.

The protein localises to the cell membrane. Functionally, involved in glutathione-independent cadmium resistance. Reduces cadmium uptake rather than activating efflux, but is not closely coupled to calcium transporter. In Arabidopsis thaliana (Mouse-ear cress), this protein is Protein PLANT CADMIUM RESISTANCE 1 (PCR1).